The sequence spans 145 residues: Hemoglobin subunit beta (145 aa).

The 145-residue stretch at 1–145 (MLTAEEKAAV…VANALAHRYH (145 aa)) folds into the Globin domain. T11 bears the Phosphothreonine mark. At S43 the chain carries Phosphoserine. K58 carries the N6-acetyllysine modification. H62 is a heme b binding site. An N6-acetyllysine modification is found at K81. Heme b is bound at residue H91. C92 carries the S-nitrosocysteine modification.

Belongs to the globin family. Heterotetramer of two alpha chains and two beta chains. As to expression, red blood cells.

Involved in oxygen transport from the lung to the various peripheral tissues. This is Hemoglobin subunit beta (HBB) from Bos gaurus frontalis (Domestic gayal).